The sequence spans 61 residues: Large ribosomal subunit protein bL32 (61 aa).

This sequence belongs to the bacterial ribosomal protein bL32 family.

The polypeptide is Large ribosomal subunit protein bL32 (Phytoplasma mali (strain AT)).